The sequence spans 3133 residues: Probable polyketide synthase 38 (3133 aa).

A Ketosynthase family 3 (KS3) domain is found at 9–440; that stretch reads DDDVAVIGIG…GSNVCLILSE (432 aa). Active-site for beta-ketoacyl synthase activity residues include Cys181, His320, and His363. An acyl/malonyl transferase region spans residues 647–680; sequence GVSADIIIGHSLGEISSAYCSGMIDFQTLCYLTY. Catalysis depends on Ser657, which acts as the For acyl/malonyl transferase activity. An N-terminal hotdog fold region spans residues 945-1067; sequence GPSIHSLGNN…GNFSLSKHNI (123 aa). Positions 945–1248 constitute a PKS/mFAS DH domain; that stretch reads GPSIHSLGNN…CTIVASNPDS (304 aa). His979 (proton acceptor; for dehydratase activity) is an active-site residue. Positions 1083-1248 are C-terminal hotdog fold; that stretch reads NFTCISKQDL…CTIVASNPDS (166 aa). Asp1155 (proton donor; for dehydratase activity) is an active-site residue. The segment at 1370 to 1408 is disordered; the sequence is NNNNNNNNNNNNNNNNNNNNNNNNNNNNNNNNNDNDNDN. Positions 2562-2639 constitute a Carrier domain; the sequence is NNNEIIRSTI…QSIEIIKSAH (78 aa). Ser2599 carries the post-translational modification O-(pantetheine 4'-phosphoryl)serine. A coiled-coil region spans residues 2649-2711; it reads NNNNSNHHDN…NNNNNNNNNN (63 aa). 2 disordered regions span residues 2691-2715 and 2794-2817; these read LNNN…NNNN and GNIS…NNNQ. Low complexity-rich tracts occupy residues 2692-2715 and 2795-2817; these read NNNN…NNNN and NISN…NNNQ.

It depends on pantetheine 4'-phosphate as a cofactor.

In terms of biological role, probable polyketide synthase. This is Probable polyketide synthase 38 (pks38) from Dictyostelium discoideum (Social amoeba).